Consider the following 265-residue polypeptide: Glutamate racemase (265 aa).

Substrate is bound by residues 9 to 10 (DS) and 41 to 42 (YG). Catalysis depends on cysteine 72, which acts as the Proton donor/acceptor. 73 to 74 (NT) contacts substrate. The active-site Proton donor/acceptor is the cysteine 183. 184 to 185 (TH) lines the substrate pocket.

Belongs to the aspartate/glutamate racemases family.

It catalyses the reaction L-glutamate = D-glutamate. Its pathway is cell wall biogenesis; peptidoglycan biosynthesis. Its function is as follows. Provides the (R)-glutamate required for cell wall biosynthesis. This chain is Glutamate racemase, found in Lysinibacillus sphaericus (strain C3-41).